A 127-amino-acid chain; its full sequence is UPF0102 protein Cpha266_0037 (127 aa).

Belongs to the UPF0102 family.

The chain is UPF0102 protein Cpha266_0037 from Chlorobium phaeobacteroides (strain DSM 266 / SMG 266 / 2430).